A 93-amino-acid polypeptide reads, in one-letter code: MARVTVQDAVEKIGNRFDLILTAARRARQLQLHTREPLVAEEGDKPTVIALREIEEGLINNQIMDQQEKFDAIVQEVAEKEAISFLADVQANS.

Belongs to the RNA polymerase subunit omega family. In terms of assembly, the RNAP catalytic core consists of 2 alpha, 1 beta, 1 beta' and 1 omega subunit. When a sigma factor is associated with the core the holoenzyme is formed, which can initiate transcription.

It carries out the reaction RNA(n) + a ribonucleoside 5'-triphosphate = RNA(n+1) + diphosphate. Functionally, promotes RNA polymerase assembly. Latches the N- and C-terminal regions of the beta' subunit thereby facilitating its interaction with the beta and alpha subunits. The sequence is that of DNA-directed RNA polymerase subunit omega from Glaesserella parasuis serovar 5 (strain SH0165) (Haemophilus parasuis).